The primary structure comprises 353 residues: Fe(3+) ions import ATP-binding protein FbpC (353 aa).

The 231-residue stretch at 9–239 folds into the ABC transporter domain; the sequence is VVFENVRKTF…PASSFIADFM (231 aa). Position 41 to 48 (41 to 48) interacts with ATP; it reads GPSGCGKT.

This sequence belongs to the ABC transporter superfamily. Fe(3+) ion importer (TC 3.A.1.10) family. In terms of assembly, the complex is composed of two ATP-binding proteins (FbpC), two transmembrane proteins (FbpB) and a solute-binding protein (FbpA).

It localises to the cell inner membrane. The enzyme catalyses Fe(3+)(out) + ATP + H2O = Fe(3+)(in) + ADP + phosphate + H(+). Functionally, part of the ABC transporter complex FbpABC involved in Fe(3+) ions import. Responsible for energy coupling to the transport system. This chain is Fe(3+) ions import ATP-binding protein FbpC, found in Agrobacterium fabrum (strain C58 / ATCC 33970) (Agrobacterium tumefaciens (strain C58)).